The chain runs to 270 residues: Pre-mRNA-splicing factor CWC23 (270 aa).

The J domain occupies 12 to 84; that stretch reads DLYRILHIHV…EHKKEYDIWY (73 aa).

It belongs to the DnaJ family. In terms of assembly, associated with the spliceosome.

It localises to the cytoplasm. The protein resides in the nucleus. In terms of biological role, involved in pre-mRNA splicing. May be involved in endoplasmic reticulum-associated protein degradation (ERAD) and required for growth at low and high temperatures. In Kluyveromyces lactis (strain ATCC 8585 / CBS 2359 / DSM 70799 / NBRC 1267 / NRRL Y-1140 / WM37) (Yeast), this protein is Pre-mRNA-splicing factor CWC23 (CWC23).